The chain runs to 126 residues: UPF0332 protein glr0978 (126 aa).

It belongs to the UPF0332 family.

The sequence is that of UPF0332 protein glr0978 from Gloeobacter violaceus (strain ATCC 29082 / PCC 7421).